The following is a 131-amino-acid chain: Large ribosomal subunit protein bL17 (131 aa).

The protein belongs to the bacterial ribosomal protein bL17 family. Part of the 50S ribosomal subunit. Contacts protein L32.

The sequence is that of Large ribosomal subunit protein bL17 from Bordetella avium (strain 197N).